Consider the following 470-residue polypeptide: Nuclear receptor subfamily 0 group B member 1 (470 aa).

Repeat copies occupy residues 1 to 67, 68 to 133, and 134 to 200. Positions 1–253 are 4 X 67 AA tandem repeats; the sequence is MAGEDHQWQG…RPVALKNPQV (253 aa). Short sequence motifs (LXXLL motif) lie at residues 13-17, 80-84, and 146-150; these read LYNML, LYSML, and LYSLL. Residues 201-253 form a 4; truncated repeat; sequence FCGEDQPQQGSTLYSMPTSTNQTPAAPEERPGAPWWDTSCGALRPVALKNPQV. Positions 205-469 constitute an NR LBD domain; that stretch reads DQPQQGSTLY…DMMLEMLCTK (265 aa). Residues 461–466 carry the AF-2 motif motif; the sequence is MMLEML.

This sequence belongs to the nuclear hormone receptor family. NR0 subfamily. Homodimer. Interacts with NR5A1, NR5A2, NR0B2 and with COPS2. Interacts with ESRRB; represses ESRRB activity at the GATA6 promoter.

It localises to the nucleus. Its subcellular location is the cytoplasm. In terms of biological role, nuclear receptor that lacks a DNA-binding domain and acts as a corepressor that inhibits the transcriptional activity of other nuclear receptors through heterodimeric interactions. Component of a cascade required for the development of the hypothalamic-pituitary-adrenal-gonadal axis. May also have a role in the development of the embryo and in the maintenance of embryonic stem cell pluripotency. The protein is Nuclear receptor subfamily 0 group B member 1 (NR0B1) of Callithrix jacchus (White-tufted-ear marmoset).